The primary structure comprises 313 residues: Porphobilinogen deaminase (313 aa).

The residue at position 241 (Cys-241) is an S-(dipyrrolylmethanemethyl)cysteine.

Belongs to the HMBS family. Monomer. Dipyrromethane serves as cofactor.

The enzyme catalyses 4 porphobilinogen + H2O = hydroxymethylbilane + 4 NH4(+). The protein operates within porphyrin-containing compound metabolism; protoporphyrin-IX biosynthesis; coproporphyrinogen-III from 5-aminolevulinate: step 2/4. It functions in the pathway porphyrin-containing compound metabolism; chlorophyll biosynthesis. Functionally, tetrapolymerization of the monopyrrole PBG into the hydroxymethylbilane pre-uroporphyrinogen in several discrete steps. The sequence is that of Porphobilinogen deaminase from Chlorobium limicola (strain DSM 245 / NBRC 103803 / 6330).